A 116-amino-acid chain; its full sequence is T cell receptor alpha variable 38-1 (116 aa).

Positions 1 to 21 (MTRVSLLWAVVVSTCLESGMA) are cleaved as a signal peptide. Positions 22 to 116 (QTVTQSQPEM…TAMYFCAFMK (95 aa)) constitute an Ig-like domain. Cys43 and Cys112 are oxidised to a cystine. Asn78 is a glycosylation site (N-linked (GlcNAc...) asparagine).

As to quaternary structure, alpha-beta TR is a heterodimer composed of an alpha and beta chain; disulfide-linked. The alpha-beta TR is associated with the transmembrane signaling CD3 coreceptor proteins to form the TR-CD3 (TcR or TCR). The assembly of alpha-beta TR heterodimers with CD3 occurs in the endoplasmic reticulum where a single alpha-beta TR heterodimer associates with one CD3D-CD3E heterodimer, one CD3G-CD3E heterodimer and one CD247 homodimer forming a stable octameric structure. CD3D-CD3E and CD3G-CD3E heterodimers preferentially associate with TR alpha and TR beta chains, respectively. The association of the CD247 homodimer is the last step of TcR assembly in the endoplasmic reticulum and is required for transport to the cell surface.

It localises to the cell membrane. Its function is as follows. V region of the variable domain of T cell receptor (TR) alpha chain that participates in the antigen recognition. Alpha-beta T cell receptors are antigen specific receptors which are essential to the immune response and are present on the cell surface of T lymphocytes. Recognize peptide-major histocompatibility (MH) (pMH) complexes that are displayed by antigen presenting cells (APC), a prerequisite for efficient T cell adaptive immunity against pathogens. Binding of alpha-beta TR to pMH complex initiates TR-CD3 clustering on the cell surface and intracellular activation of LCK that phosphorylates the ITAM motifs of CD3G, CD3D, CD3E and CD247 enabling the recruitment of ZAP70. In turn ZAP70 phosphorylates LAT, which recruits numerous signaling molecules to form the LAT signalosome. The LAT signalosome propagates signal branching to three major signaling pathways, the calcium, the mitogen-activated protein kinase (MAPK) kinase and the nuclear factor NF-kappa-B (NF-kB) pathways, leading to the mobilization of transcription factors that are critical for gene expression and essential for T cell growth and differentiation. The T cell repertoire is generated in the thymus, by V-(D)-J rearrangement. This repertoire is then shaped by intrathymic selection events to generate a peripheral T cell pool of self-MH restricted, non-autoaggressive T cells. Post-thymic interaction of alpha-beta TR with the pMH complexes shapes TR structural and functional avidity. This chain is T cell receptor alpha variable 38-1, found in Homo sapiens (Human).